We begin with the raw amino-acid sequence, 909 residues long: Cutinase transcription factor 1 alpha (909 aa).

Residues 1–51 (MSSGDAPPQAQPQPHQQEQPNQRQSSTPAPSAAPVPPAPSTSTSNSAGGVS) form a disordered region. Residues 12–30 (PQPHQQEQPNQRQSSTPAP) show a composition bias toward low complexity. The zn(2)-C6 fungal-type DNA-binding region spans 61-90 (CETCHARKVRCDAASLGVPCTNCVAFQIEC). 3 disordered regions span residues 95-159 (PKRK…EAQA), 651-757 (AEGK…SFSV), and 841-878 (LPQG…QGQA). Over residues 110 to 119 (KDSDSDRGDG) the composition is skewed to basic and acidic residues. Over residues 142 to 156 (VFHSHNGTPPTTLTE) the composition is skewed to polar residues. Residues 669–683 (QHSRQQEAPKRKYDE) show a composition bias toward basic and acidic residues. Composition is skewed to polar residues over residues 704-717 (PQTP…TSSM), 737-755 (GGTN…NPSF), and 865-878 (SPDS…QGQA).

Its subcellular location is the nucleus. This Fusarium vanettenii (Neocosmospora pisi) protein is Cutinase transcription factor 1 alpha (CTF1-ALPHA).